The sequence spans 276 residues: Light-independent protochlorophyllide reductase iron-sulfur ATP-binding protein (276 aa).

Residues 12-17 (GIGKST) and lysine 41 contribute to the ATP site. Residue serine 16 participates in Mg(2+) binding. Positions 97 and 131 each coordinate [4Fe-4S] cluster. 182–183 (NR) contributes to the ATP binding site.

The protein belongs to the NifH/BchL/ChlL family. As to quaternary structure, homodimer. Protochlorophyllide reductase is composed of three subunits; BchL, BchN and BchB. Requires [4Fe-4S] cluster as cofactor.

It carries out the reaction chlorophyllide a + oxidized 2[4Fe-4S]-[ferredoxin] + 2 ADP + 2 phosphate = protochlorophyllide a + reduced 2[4Fe-4S]-[ferredoxin] + 2 ATP + 2 H2O. It functions in the pathway porphyrin-containing compound metabolism; bacteriochlorophyll biosynthesis (light-independent). Functionally, component of the dark-operative protochlorophyllide reductase (DPOR) that uses Mg-ATP and reduced ferredoxin to reduce ring D of protochlorophyllide (Pchlide) to form chlorophyllide a (Chlide). This reaction is light-independent. The L component serves as a unique electron donor to the NB-component of the complex, and binds Mg-ATP. This chain is Light-independent protochlorophyllide reductase iron-sulfur ATP-binding protein, found in Chlorobium chlorochromatii (strain CaD3).